A 231-amino-acid chain; its full sequence is Ribosomal RNA small subunit methyltransferase G (231 aa).

Residues Gly92, Leu97, 143-144, and Arg162 each bind S-adenosyl-L-methionine; that span reads VE.

Belongs to the methyltransferase superfamily. RNA methyltransferase RsmG family.

It localises to the cytoplasm. The enzyme catalyses guanosine(527) in 16S rRNA + S-adenosyl-L-methionine = N(7)-methylguanosine(527) in 16S rRNA + S-adenosyl-L-homocysteine. Functionally, specifically methylates the N7 position of guanine in position 527 of 16S rRNA. This chain is Ribosomal RNA small subunit methyltransferase G, found in Burkholderia thailandensis (strain ATCC 700388 / DSM 13276 / CCUG 48851 / CIP 106301 / E264).